A 530-amino-acid polypeptide reads, in one-letter code: AP-4 complex subunit mu (530 aa).

The interval 164–187 (PKQGVKPIHSGSKNSSSGGSSLST) is disordered. Positions 173–186 (SGSKNSSSGGSSLS) are enriched in low complexity. Positions 227–527 (DNEIYIDLCE…ITDSKSFVSR (301 aa)) constitute an MHD domain.

This sequence belongs to the adaptor complexes medium subunit family. In terms of assembly, may be part of the adaptor protein complex 4 (AP-4), a heterotetramer composed of two large adaptins (epsilon-type subunitand beta-type subunit), a medium adaptin (mu-type subunit) and a small adaptin (sigma-type).

The protein resides in the golgi apparatus. Its subcellular location is the trans-Golgi network membrane. It localises to the early endosome. In terms of biological role, probable component of an adaptor protein complex. Adaptor protein complexes are vesicle coat components involved both in vesicle formation and cargo selection. They control the vesicular transport of proteins in different trafficking pathways. This Dictyostelium discoideum (Social amoeba) protein is AP-4 complex subunit mu (apm4).